The following is a 407-amino-acid chain: Protein phosphatase methylesterase 1 (407 aa).

A disordered region spans residues Met1–Pro53. Residues Ser185, Asp211, and His342 contribute to the active site. The span at Gly388–Thr401 shows a compositional bias: gly residues. The tract at residues Gly388–Ser407 is disordered.

Belongs to the AB hydrolase superfamily.

It catalyses the reaction [phosphatase 2A protein]-C-terminal L-leucine methyl ester + H2O = [phosphatase 2A protein]-C-terminal L-leucine + methanol + H(+). In terms of biological role, demethylates proteins that have been reversibly carboxymethylated. Demethylates the phosphatase PP2A catalytic subunit. The sequence is that of Protein phosphatase methylesterase 1 (ppe1) from Emericella nidulans (strain FGSC A4 / ATCC 38163 / CBS 112.46 / NRRL 194 / M139) (Aspergillus nidulans).